Reading from the N-terminus, the 2968-residue chain is Polyketide synthase 37 (2968 aa).

The Ketosynthase family 3 (KS3) domain occupies 32–454 (KEPIAIIGIG…GSNSSLFLSS (423 aa)). Active-site for beta-ketoacyl synthase activity residues include Cys198, His338, and His378. The interval 624–950 (FIFSGQGQQW…LSTLSKNSNS (327 aa)) is malonyl-CoA:ACP transacylase (MAT) domain. Ser718 functions as the For malonyltransferase activity in the catalytic mechanism. The tract at residues 1017–1157 (PPMFISLDRK…GIIKYGTNYL (141 aa)) is N-terminal hotdog fold. Residues 1017-1350 (PPMFISLDRK…FKGINSSSSS (334 aa)) enclose the PKS/mFAS DH domain. A dehydratase (DH) domain region spans residues 1031-1345 (TPSFEVRLNQ…LTNLEFKGIN (315 aa)). Residue His1049 is the Proton acceptor; for dehydratase activity of the active site. The C-terminal hotdog fold stretch occupies residues 1183–1350 (FKSFNSNEFY…FKGINSSSSS (168 aa)). Asp1257 acts as the Proton donor; for dehydratase activity in catalysis. The disordered stretch occupies residues 1522–1547 (SCGGGGGSTNNTISNSSSSISSIDNG). The segment covering 1530–1547 (TNNTISNSSSSISSIDNG) has biased composition (low complexity). An enoyl reductase (ER) domain region spans residues 1718 to 2053 (GIISDLKIKQ…SGNHIGKILI (336 aa)). Residues 2083 to 2277 (TYIFTGFGGL…LKSSCIHLAS (195 aa)) are ketoreductase (KR) domain. The interval 2379 to 2400 (GDGSFDDLNQLEDEGQQGFGNG) is disordered. One can recognise a Carrier domain in the interval 2421 to 2498 (FDNDFYTKSI…STVELIKNKL (78 aa)). Ser2458 carries the post-translational modification O-(pantetheine 4'-phosphoryl)serine. Residues 2568–2589 (SSSSNNSNSKNELTSPPPSAKR) are disordered. Positions 2707–2968 (ISHVVGVTST…IEAILFKLIK (262 aa)) are chalcone synthase. Cys2747 is an active-site residue.

Requires pantetheine 4'-phosphate as cofactor.

The catalysed reaction is (E)-4-coumaroyl-CoA + 3 malonyl-CoA + 3 H(+) = 2',4,4',6'-tetrahydroxychalcone + 3 CO2 + 4 CoA. It catalyses the reaction hexanoyl-CoA + 3 malonyl-CoA + 3 H(+) = 2,4,6-trihydroxyphenylhexan-1-one + 3 CO2 + 4 CoA. The protein operates within secondary metabolite biosynthesis; flavonoid biosynthesis. Polyketide synthase; part of the gene cluster that mediates the biosynthesis of DIF-1 (Differentiation Inducing Factor-1), a signal molecule involved in the differentiation of pstO (prestalk-O) cells. The three-step process begins with the formation of (2,4,6-trihydroxyphenyl)-1-hexan-1-one (THPH) by the polyketide synthase StlB. THPH is then dichlorinated by the flavin-dependent halogenase ChlA. The last step of DIF-1 biosynthesis is the O-methylation of dichloro-THPH (or des-methyl-DIF-1) by the methyltransferase DmtA to yield DIF-1. In Dictyostelium discoideum (Social amoeba), this protein is Polyketide synthase 37 (StlB).